Reading from the N-terminus, the 704-residue chain is PHD finger protein MALE MEIOCYTE DEATH 1 (704 aa).

The PHD-type zinc-finger motif lies at 606–656 (MVKCICRARDDDGERMISCDVCEVWQHTRCCGIDDSDTLPPLFVCSNCCEE). Zn(2+)-binding residues include Cys-609, Cys-611, Cys-624, Cys-627, His-632, Cys-635, Cys-650, and Cys-653.

Interacts with JMJ16 in the nucleus of male meiocytes, especially on pachytene chromosomes. In terms of tissue distribution, expressed in inflorescence, specifically in male meiocytes.

It is found in the nucleus. Functionally, probable transcription factor required for chromosome organization and progression during male meiosis (e.g. microsporogenesis). Necessary for fertility and meiotic progressive compaction of prophase I chromosomes to metaphase I bivalents. Together with JMJ16, promotes gene expression in male meiocytes in an H3K9me3-dependent manner, and contributes to meiotic chromosome condensation by triggering some condensin promoters (e.g. CAP-D3 and CAP-H). In Arabidopsis thaliana (Mouse-ear cress), this protein is PHD finger protein MALE MEIOCYTE DEATH 1.